Reading from the N-terminus, the 104-residue chain is L-rhamnose mutarotase (104 aa).

Position 18 (tyrosine 18) interacts with substrate. Histidine 22 (proton donor) is an active-site residue. Residues tyrosine 41 and 76 to 77 (WW) contribute to the substrate site.

This sequence belongs to the rhamnose mutarotase family. As to quaternary structure, homodimer.

The protein localises to the cytoplasm. The catalysed reaction is alpha-L-rhamnose = beta-L-rhamnose. The protein operates within carbohydrate metabolism; L-rhamnose metabolism. Its function is as follows. Involved in the anomeric conversion of L-rhamnose. This Escherichia coli O7:K1 (strain IAI39 / ExPEC) protein is L-rhamnose mutarotase.